The following is a 289-amino-acid chain: Polyketide biosynthesis malonyl CoA-acyl carrier protein transacylase BaeC (289 aa).

Catalysis depends on residues Ser-87 and His-193.

This sequence belongs to the FabD family.

Its subcellular location is the cytoplasm. It carries out the reaction holo-[ACP] + malonyl-CoA = malonyl-[ACP] + CoA. It participates in antibiotic biosynthesis; bacillaene biosynthesis. In terms of biological role, involved in some intermediate steps for the synthesis of the antibiotic polyketide bacillaene which is involved in secondary metabolism. It catalyzes the transfer of the malonyl-CoA group to the acyl-carrier-protein AcpK (Mal-AcpK). The sequence is that of Polyketide biosynthesis malonyl CoA-acyl carrier protein transacylase BaeC (baeC) from Bacillus velezensis (strain DSM 23117 / BGSC 10A6 / LMG 26770 / FZB42) (Bacillus amyloliquefaciens subsp. plantarum).